Reading from the N-terminus, the 250-residue chain is AA9 family lytic polysaccharide monooxygenase AA17 (250 aa).

A signal peptide spans 1-21; it reads MAMSKIVSLTGLLASASLVAG. 2 residues coordinate Cu(2+): His22 and His107. Intrachain disulfides connect Cys77/Cys199 and Cys118/Cys122. N-linked (GlcNAc...) asparagine glycosylation is present at Asn159. 2 residues coordinate O2: His185 and Gln194. Tyr196 contacts Cu(2+).

It belongs to the polysaccharide monooxygenase AA9 family. Cu(2+) is required as a cofactor.

Its subcellular location is the secreted. Lytic polysaccharide monooxygenase (LPMO) that exhibits oxidative cleavage beta-O-4 linkage of lignin resulting in the formation of aromatic compound guaiacol. Catalysis by LPMOs requires the reduction of the active-site copper from Cu(II) to Cu(I) by a reducing agent and H(2)O(2) or O(2) as a cosubstrate. Does not use cellulose, cello-oligosaccharides, xyloglucan, xylan, chitin nor starch as substrates. Able to depolymerize the lignin dimer guaicyl glycerol beta-guaicyl ether (GGE). In Aspergillus oryzae (strain ATCC 42149 / RIB 40) (Yellow koji mold), this protein is AA9 family lytic polysaccharide monooxygenase AA17.